The following is a 319-amino-acid chain: Putative protein phosphatase 2C 23 (319 aa).

The region spanning 73–314 (AVRMESASCY…DDITVVVACI (242 aa)) is the PPM-type phosphatase domain. Mn(2+)-binding residues include Gly102, Asp235, and Asp305.

The protein belongs to the PP2C family. It depends on Mg(2+) as a cofactor.

The catalysed reaction is O-phospho-L-seryl-[protein] + H2O = L-seryl-[protein] + phosphate. It catalyses the reaction O-phospho-L-threonyl-[protein] + H2O = L-threonyl-[protein] + phosphate. This Oryza sativa subsp. japonica (Rice) protein is Putative protein phosphatase 2C 23.